We begin with the raw amino-acid sequence, 715 residues long: Fatty acid oxidation complex subunit alpha (715 aa).

The segment at 1-190 is enoyl-CoA hydratase/isomerase; that stretch reads MIYEGKAITV…KVSAVDAVVT (190 aa). Asp-297 provides a ligand contact to substrate. The tract at residues 312–715 is 3-hydroxyacyl-CoA dehydrogenase; the sequence is KDVKQAAVLG…MAKNGQSFFG (404 aa). Residues Met-325, Asp-344, 401–403, Lys-408, and Ser-430 contribute to the NAD(+) site; that span reads VVE. His-451 (for 3-hydroxyacyl-CoA dehydrogenase activity) is an active-site residue. Asn-454 serves as a coordination point for NAD(+). Asn-501 and Tyr-660 together coordinate substrate.

It in the N-terminal section; belongs to the enoyl-CoA hydratase/isomerase family. This sequence in the C-terminal section; belongs to the 3-hydroxyacyl-CoA dehydrogenase family. In terms of assembly, heterotetramer of two alpha chains (FadB) and two beta chains (FadA).

The catalysed reaction is a (3S)-3-hydroxyacyl-CoA + NAD(+) = a 3-oxoacyl-CoA + NADH + H(+). The enzyme catalyses a (3S)-3-hydroxyacyl-CoA = a (2E)-enoyl-CoA + H2O. It catalyses the reaction a 4-saturated-(3S)-3-hydroxyacyl-CoA = a (3E)-enoyl-CoA + H2O. It carries out the reaction (3S)-3-hydroxybutanoyl-CoA = (3R)-3-hydroxybutanoyl-CoA. The catalysed reaction is a (3Z)-enoyl-CoA = a 4-saturated (2E)-enoyl-CoA. The enzyme catalyses a (3E)-enoyl-CoA = a 4-saturated (2E)-enoyl-CoA. It participates in lipid metabolism; fatty acid beta-oxidation. Its function is as follows. Involved in the aerobic and anaerobic degradation of long-chain fatty acids via beta-oxidation cycle. Catalyzes the formation of 3-oxoacyl-CoA from enoyl-CoA via L-3-hydroxyacyl-CoA. It can also use D-3-hydroxyacyl-CoA and cis-3-enoyl-CoA as substrate. This is Fatty acid oxidation complex subunit alpha from Pseudomonas fragi.